The chain runs to 138 residues: Transcription antitermination protein NusB (138 aa).

Belongs to the NusB family.

In terms of biological role, involved in transcription antitermination. Required for transcription of ribosomal RNA (rRNA) genes. Binds specifically to the boxA antiterminator sequence of the ribosomal RNA (rrn) operons. This is Transcription antitermination protein NusB from Alkaliphilus oremlandii (strain OhILAs) (Clostridium oremlandii (strain OhILAs)).